Consider the following 407-residue polypeptide: 1-deoxy-D-xylulose 5-phosphate reductoisomerase (407 aa).

NADPH contacts are provided by threonine 25, glycine 26, serine 27, isoleucine 28, asparagine 53, and asparagine 136. A 1-deoxy-D-xylulose 5-phosphate-binding site is contributed by lysine 137. Glutamate 138 contacts NADPH. Position 162 (aspartate 162) interacts with Mn(2+). The 1-deoxy-D-xylulose 5-phosphate site is built by serine 163, glutamate 164, serine 188, and histidine 211. Residue glutamate 164 participates in Mn(2+) binding. Glycine 217 is an NADPH binding site. Residues serine 224, asparagine 229, lysine 230, and glutamate 233 each contribute to the 1-deoxy-D-xylulose 5-phosphate site. Glutamate 233 contributes to the Mn(2+) binding site.

Belongs to the DXR family. Mg(2+) serves as cofactor. The cofactor is Mn(2+).

The catalysed reaction is 2-C-methyl-D-erythritol 4-phosphate + NADP(+) = 1-deoxy-D-xylulose 5-phosphate + NADPH + H(+). The protein operates within isoprenoid biosynthesis; isopentenyl diphosphate biosynthesis via DXP pathway; isopentenyl diphosphate from 1-deoxy-D-xylulose 5-phosphate: step 1/6. Functionally, catalyzes the NADPH-dependent rearrangement and reduction of 1-deoxy-D-xylulose-5-phosphate (DXP) to 2-C-methyl-D-erythritol 4-phosphate (MEP). The sequence is that of 1-deoxy-D-xylulose 5-phosphate reductoisomerase from Rhodopseudomonas palustris (strain BisA53).